A 201-amino-acid chain; its full sequence is Transcriptional regulator GfcR (201 aa).

Belongs to the purine/pyrimidine phosphoribosyltransferase family. GfcR subfamily.

This is Transcriptional regulator GfcR from Methanobrevibacter smithii (strain ATCC 35061 / DSM 861 / OCM 144 / PS).